Reading from the N-terminus, the 177-residue chain is NADH-quinone oxidoreductase subunit B (177 aa).

Residues cysteine 56, cysteine 57, cysteine 121, and cysteine 151 each coordinate [4Fe-4S] cluster.

This sequence belongs to the complex I 20 kDa subunit family. As to quaternary structure, NDH-1 is composed of 14 different subunits. Subunits NuoB, C, D, E, F, and G constitute the peripheral sector of the complex. [4Fe-4S] cluster serves as cofactor.

Its subcellular location is the cell inner membrane. It carries out the reaction a quinone + NADH + 5 H(+)(in) = a quinol + NAD(+) + 4 H(+)(out). Functionally, NDH-1 shuttles electrons from NADH, via FMN and iron-sulfur (Fe-S) centers, to quinones in the respiratory chain. Couples the redox reaction to proton translocation (for every two electrons transferred, four hydrogen ions are translocated across the cytoplasmic membrane), and thus conserves the redox energy in a proton gradient. This is NADH-quinone oxidoreductase subunit B from Jannaschia sp. (strain CCS1).